The primary structure comprises 189 residues: Putative nucleotidase BC_3386 (189 aa).

It belongs to the 5'(3')-deoxyribonucleotidase family.

The protein is Putative nucleotidase BC_3386 of Bacillus cereus (strain ATCC 14579 / DSM 31 / CCUG 7414 / JCM 2152 / NBRC 15305 / NCIMB 9373 / NCTC 2599 / NRRL B-3711).